Reading from the N-terminus, the 319-residue chain is Transaldolase (319 aa).

The active-site Schiff-base intermediate with substrate is the Lys132.

This sequence belongs to the transaldolase family. Type 1 subfamily. As to quaternary structure, homodimer.

The protein resides in the cytoplasm. The catalysed reaction is D-sedoheptulose 7-phosphate + D-glyceraldehyde 3-phosphate = D-erythrose 4-phosphate + beta-D-fructose 6-phosphate. It functions in the pathway carbohydrate degradation; pentose phosphate pathway; D-glyceraldehyde 3-phosphate and beta-D-fructose 6-phosphate from D-ribose 5-phosphate and D-xylulose 5-phosphate (non-oxidative stage): step 2/3. Its function is as follows. Transaldolase is important for the balance of metabolites in the pentose-phosphate pathway. This is Transaldolase from Alteromonas mediterranea (strain DSM 17117 / CIP 110805 / LMG 28347 / Deep ecotype).